A 117-amino-acid chain; its full sequence is Small ribosomal subunit protein uS17 (117 aa).

Residues 1 to 42 form a disordered region; the sequence is MMAEAKKAAPKKAATAASKDADAKGPKHTPPNPKVRGRRKTR.

The protein belongs to the universal ribosomal protein uS17 family. Part of the 30S ribosomal subunit.

Functionally, one of the primary rRNA binding proteins, it binds specifically to the 5'-end of 16S ribosomal RNA. The polypeptide is Small ribosomal subunit protein uS17 (Mycolicibacterium paratuberculosis (strain ATCC BAA-968 / K-10) (Mycobacterium paratuberculosis)).